The following is a 179-amino-acid chain: Replication restart protein DnaT (179 aa).

The segment at 156 to 179 (GGLPKRDVNTVSEPDSQIPPGFRG) is disordered.

This sequence belongs to the DnaT family. As to quaternary structure, homooligomerizes. Interacts with PriB. Component of the replication restart primosome. Primosome assembly occurs via a 'hand-off' mechanism. PriA binds to replication forks, subsequently PriB then DnaT bind; DnaT then displaces ssDNA to generate the helicase loading substrate.

In terms of biological role, involved in the restart of stalled replication forks, which reloads the replicative helicase on sites other than the origin of replication. Can function in multiple replication restart pathways. Displaces ssDNA from a PriB-ssDNA complex. Probably forms a spiral filament on ssDNA. This chain is Replication restart protein DnaT, found in Escherichia coli O81 (strain ED1a).